Reading from the N-terminus, the 358-residue chain is Aminomethyltransferase (358 aa).

This sequence belongs to the GcvT family. The glycine cleavage system is composed of four proteins: P, T, L and H.

The enzyme catalyses N(6)-[(R)-S(8)-aminomethyldihydrolipoyl]-L-lysyl-[protein] + (6S)-5,6,7,8-tetrahydrofolate = N(6)-[(R)-dihydrolipoyl]-L-lysyl-[protein] + (6R)-5,10-methylene-5,6,7,8-tetrahydrofolate + NH4(+). The glycine cleavage system catalyzes the degradation of glycine. This Francisella philomiragia subsp. philomiragia (strain ATCC 25017 / CCUG 19701 / FSC 153 / O#319-036) protein is Aminomethyltransferase.